We begin with the raw amino-acid sequence, 390 residues long: 3-ketoacyl-CoA thiolase (390 aa).

The active-site Acyl-thioester intermediate is Cys-95. Residues His-346 and Cys-376 each act as proton acceptor in the active site.

Belongs to the thiolase-like superfamily. Thiolase family. In terms of assembly, heterotetramer of two alpha chains (FadB) and two beta chains (FadA).

The protein localises to the cytoplasm. The catalysed reaction is an acyl-CoA + acetyl-CoA = a 3-oxoacyl-CoA + CoA. It functions in the pathway lipid metabolism; fatty acid beta-oxidation. Its function is as follows. Catalyzes the final step of fatty acid oxidation in which acetyl-CoA is released and the CoA ester of a fatty acid two carbons shorter is formed. In Acinetobacter baumannii (strain ATCC 17978 / DSM 105126 / CIP 53.77 / LMG 1025 / NCDC KC755 / 5377), this protein is 3-ketoacyl-CoA thiolase.